Consider the following 82-residue polypeptide: ATP synthase subunit c, chloroplastic (82 aa).

A run of 2 helical transmembrane segments spans residues 3–23 (PIVA…AAIG) and 57–77 (FAFM…LLFA).

The protein belongs to the ATPase C chain family. As to quaternary structure, F-type ATPases have 2 components, F(1) - the catalytic core - and F(0) - the membrane proton channel. F(1) has five subunits: alpha(3), beta(3), gamma(1), delta(1), epsilon(1). F(0) has four main subunits: a(1), b(1), b'(1) and c(10-14). The alpha and beta chains form an alternating ring which encloses part of the gamma chain. F(1) is attached to F(0) by a central stalk formed by the gamma and epsilon chains, while a peripheral stalk is formed by the delta, b and b' chains.

It is found in the plastid. The protein localises to the chloroplast thylakoid membrane. F(1)F(0) ATP synthase produces ATP from ADP in the presence of a proton or sodium gradient. F-type ATPases consist of two structural domains, F(1) containing the extramembraneous catalytic core and F(0) containing the membrane proton channel, linked together by a central stalk and a peripheral stalk. During catalysis, ATP synthesis in the catalytic domain of F(1) is coupled via a rotary mechanism of the central stalk subunits to proton translocation. Functionally, key component of the F(0) channel; it plays a direct role in translocation across the membrane. A homomeric c-ring of between 10-14 subunits forms the central stalk rotor element with the F(1) delta and epsilon subunits. The chain is ATP synthase subunit c, chloroplastic from Tetradesmus obliquus (Green alga).